The chain runs to 296 residues: MTSFLSFSAISAHPPTFSGASFRPRSFSPRLFKSCVKCTYAEAGLSSASWSAPIDIVADVKSERVVVLGGNGFVGSAICKAAISNGIEVVSVSRSGRPNFEDSWLDQVTWVTGDVFYLNWDEVLLGATAVVSTIGGFGNEEQMKRINGEANVTAVNAAKDFGVPKFVLITVHDYNLPPFILSNGYFTGKRNAEAELLSKYPTSGVVLRPGFIYGKRKVNGIEVPLDLVGEPLDKIYDSAERFIRPLRSLPASDLILAPPVNVDDLALAVINAVKDDDFFGIFTIEQIKEAAAKMRA.

The N-terminal 57 residues, 1-57 (MTSFLSFSAISAHPPTFSGASFRPRSFSPRLFKSCVKCTYAEAGLSSASWSAPIDIV), are a transit peptide targeting the chloroplast.

This sequence belongs to the NAD(P)-dependent epimerase/dehydratase family.

Its subcellular location is the plastid. It localises to the chloroplast. It is found in the plastoglobule. This is an uncharacterized protein from Arabidopsis thaliana (Mouse-ear cress).